A 1312-amino-acid polypeptide reads, in one-letter code: Cyclic GMP-binding protein D (1312 aa).

Residues 26–155 (GFSAIKSCSL…EFFKAKKMAR (130 aa)) enclose the N-terminal Ras-GEF domain. Low complexity-rich tracts occupy residues 206–236 (NTMN…SSPN) and 275–296 (NGTS…LFNQ). Disordered regions lie at residues 206–244 (NTMN…RSSM) and 260–326 (NFNN…NNVN). Residues 297 to 310 (QPSLSMLNDDGSVQ) show a composition bias toward polar residues. The span at 311 to 326 (NNNNNNNNNNNNNNVN) shows a compositional bias: low complexity. One can recognise a Ras-GEF domain in the interval 353–582 (LPEAIAKELT…FRLSKIREET (230 aa)). Residues 586-658 (QSLKESNGIG…NCGNGSGISS (73 aa)) form a disordered region. The span at 591-612 (SNGIGNSNSTSGGSSSSLVNKD) shows a compositional bias: low complexity. Residues 613–625 (GSGGGGGSGGGGS) show a composition bias toward gly residues. A compositionally biased stretch (basic and acidic residues) spans 630–644 (GDGKGDGKDNRDGRG). Residues 646 to 657 (GNSNCGNGSGIS) show a composition bias toward low complexity. 698 to 857 (VSSTLSEREW…ATFYKFIGVI (160 aa)) contacts a nucleoside 3',5'-cyclic phosphate. In terms of domain architecture, GRAM spans 940–1006 (SSFRTKFGLS…DKILTVDKNI (67 aa)). Residues 1059-1087 (QQQQPSQQPSQQQSQSSQLQQSVSASSTT) show a composition bias toward low complexity. Disordered stretches follow at residues 1059–1108 (QQQQ…IKDL) and 1167–1210 (NNIN…NSSI). Residues 1105–1218 (IKDL…SNTS) and 1182–1303 (NNNN…LACV) contribute to the a nucleoside 3',5'-cyclic phosphate site.

Its function is as follows. Promotes the exchange of Ras-bound GDP by GTP. Induces the formation of substrate-attached pseudopodia, that leads to increased adhesion and thereby negatively influencing cell speed and polarity. This Dictyostelium discoideum (Social amoeba) protein is Cyclic GMP-binding protein D (gbpD).